Here is a 327-residue protein sequence, read N- to C-terminus: Beta-ketoacyl-[acyl-carrier-protein] synthase III (327 aa).

Residues C112 and H253 contribute to the active site. Residues 254–258 (QANER) form an ACP-binding region. N283 is a catalytic residue.

This sequence belongs to the thiolase-like superfamily. FabH family. As to quaternary structure, homodimer.

The protein resides in the cytoplasm. It carries out the reaction malonyl-[ACP] + acetyl-CoA + H(+) = 3-oxobutanoyl-[ACP] + CO2 + CoA. The protein operates within lipid metabolism; fatty acid biosynthesis. Catalyzes the condensation reaction of fatty acid synthesis by the addition to an acyl acceptor of two carbons from malonyl-ACP. Catalyzes the first condensation reaction which initiates fatty acid synthesis and may therefore play a role in governing the total rate of fatty acid production. Possesses both acetoacetyl-ACP synthase and acetyl transacylase activities. Its substrate specificity determines the biosynthesis of branched-chain and/or straight-chain of fatty acids. This is Beta-ketoacyl-[acyl-carrier-protein] synthase III from Chlamydia muridarum (strain MoPn / Nigg).